Here is a 483-residue protein sequence, read N- to C-terminus: Regulatory protein ViaA (483 aa).

It belongs to the ViaA family. Homodimer. Interacts with RavA.

The protein localises to the cytoplasm. Its function is as follows. Component of the RavA-ViaA chaperone complex, which may act on the membrane to optimize the function of some of the respiratory chains. ViaA stimulates the ATPase activity of RavA. In Salmonella paratyphi A (strain ATCC 9150 / SARB42), this protein is Regulatory protein ViaA.